We begin with the raw amino-acid sequence, 314 residues long: R2-like ligand binding oxidase (314 aa).

Residues Glu-68, Glu-101, and His-104 each contribute to the Mn(2+) site. A cross-link (3-(O4'-tyrosyl)-valine (Val-Tyr)) is located at residues Val-71–Tyr-162. Glu-101 is a Fe cation binding site. 3 residues coordinate Fe cation: Glu-167, Glu-202, and His-205.

The protein belongs to the ribonucleoside diphosphate reductase small chain family. R2-like ligand binding oxidase subfamily. In terms of assembly, homodimer. The cofactor is Fe cation. Requires Mn(2+) as cofactor.

In terms of biological role, probable oxidase that might be involved in lipid metabolism. In Mycobacterium tuberculosis (strain ATCC 25177 / H37Ra), this protein is R2-like ligand binding oxidase.